Reading from the N-terminus, the 595-residue chain is Alpha-1,3-galactosidase B (595 aa).

Residues M1–A22 form the signal peptide. PbH1 repeat units follow at residues T432–T454, P455–G477, and C488–D541.

It belongs to the glycosyl hydrolase 110 family. B subfamily.

It catalyses the reaction Hydrolysis of terminal, non-reducing branched (1-&gt;3)-alpha-D-galactosidic residues, producing free D-galactose.. The enzyme catalyses Hydrolysis of terminal, non-reducing linear (1-&gt;3)-alpha-D-galactosidic residues, producing free D-galactose.. It carries out the reaction Hydrolysis of terminal, non-reducing alpha-D-galactose residues in alpha-D-galactosides, including galactose oligosaccharides, galactomannans and galactolipids.. In terms of biological role, alpha-galactosidase. Removes both branched alpha-1,3-linked galactose residues of blood group B antigens and linear alpha-1,3-linked galactose structures. The protein is Alpha-1,3-galactosidase B (glaB) of Bacteroides fragilis (strain ATCC 25285 / DSM 2151 / CCUG 4856 / JCM 11019 / LMG 10263 / NCTC 9343 / Onslow / VPI 2553 / EN-2).